The sequence spans 252 residues: MRKKIVVGNWKMNNGVAASEQLAADLLAALGSSFTGCDVGIAPTFLSLTTAGKVIAGSTIQLVAQNCHYENDGAYTGEVSAAMLKGAGCSSVIIGHSERRQFFGETNATVNLRVKKALAEGLDVILCVGETLAERESGVTGDIVSAQVREGLVGVSDISNVVIAYEPVWAIGTGKTATSAQAEEVHLMIRTLVTELYGEPAAQALRIQYGGSVKPSNAVELFAMPNIDGGLIGGASLNAADFVAIVQAAAGK.

Residue 9–11 (NWK) coordinates substrate. Histidine 96 functions as the Electrophile in the catalytic mechanism. Glutamate 166 serves as the catalytic Proton acceptor. Substrate-binding positions include glycine 172, serine 212, and 233-234 (GG).

Belongs to the triosephosphate isomerase family. As to quaternary structure, homodimer.

Its subcellular location is the cytoplasm. The enzyme catalyses D-glyceraldehyde 3-phosphate = dihydroxyacetone phosphate. The protein operates within carbohydrate biosynthesis; gluconeogenesis. It participates in carbohydrate degradation; glycolysis; D-glyceraldehyde 3-phosphate from glycerone phosphate: step 1/1. Functionally, involved in the gluconeogenesis. Catalyzes stereospecifically the conversion of dihydroxyacetone phosphate (DHAP) to D-glyceraldehyde-3-phosphate (G3P). This chain is Triosephosphate isomerase, found in Chlorobium chlorochromatii (strain CaD3).